A 1370-amino-acid polypeptide reads, in one-letter code: DNA-directed RNA polymerase subunit beta (1370 aa).

This sequence belongs to the RNA polymerase beta chain family. As to quaternary structure, the RNAP catalytic core consists of 2 alpha, 1 beta, 1 beta' and 1 omega subunit. When a sigma factor is associated with the core the holoenzyme is formed, which can initiate transcription.

It catalyses the reaction RNA(n) + a ribonucleoside 5'-triphosphate = RNA(n+1) + diphosphate. Its function is as follows. DNA-dependent RNA polymerase catalyzes the transcription of DNA into RNA using the four ribonucleoside triphosphates as substrates. The sequence is that of DNA-directed RNA polymerase subunit beta from Bordetella avium (strain 197N).